A 61-amino-acid chain; its full sequence is Large ribosomal subunit protein bL32 (61 aa).

The span at 1–18 shows a compositional bias: basic residues; it reads MAIVPKRKTSKQRKRKRQ. Residues 1–20 form a disordered region; it reads MAIVPKRKTSKQRKRKRQTH.

Belongs to the bacterial ribosomal protein bL32 family.

This Mycoplasmopsis pulmonis (strain UAB CTIP) (Mycoplasma pulmonis) protein is Large ribosomal subunit protein bL32 (rpmF).